We begin with the raw amino-acid sequence, 126 residues long: Large-conductance mechanosensitive channel (126 aa).

The next 2 helical transmembrane spans lie at 14–34 (VIDL…VKSL) and 67–87 (GSFL…FILV).

The protein belongs to the MscL family. Homopentamer.

Its subcellular location is the cell membrane. Its function is as follows. Channel that opens in response to stretch forces in the membrane lipid bilayer. May participate in the regulation of osmotic pressure changes within the cell. This chain is Large-conductance mechanosensitive channel, found in Lactiplantibacillus plantarum (strain ATCC BAA-793 / NCIMB 8826 / WCFS1) (Lactobacillus plantarum).